The sequence spans 274 residues: Large ribosomal subunit protein uL2cz/uL2cy (274 aa).

Disordered regions lie at residues 1–25 (MAIH…VKSN) and 224–274 (NPVD…RRSK).

It belongs to the universal ribosomal protein uL2 family. In terms of assembly, part of the 50S ribosomal subunit.

It localises to the plastid. The protein resides in the chloroplast. This chain is Large ribosomal subunit protein uL2cz/uL2cy (rpl2-A), found in Aethionema cordifolium (Lebanon stonecress).